Here is a 93-residue protein sequence, read N- to C-terminus: MARSLKKGPFVDDHLMKKVLKAKEEKNPKPIKTWSRRSTITPDMIGLTINVHNGRDFVPVYVTERHVGFKLGEFAPTRTFRGHKGSVQKKIGK.

This sequence belongs to the universal ribosomal protein uS19 family.

Functionally, protein S19 forms a complex with S13 that binds strongly to the 16S ribosomal RNA. In Nautilia profundicola (strain ATCC BAA-1463 / DSM 18972 / AmH), this protein is Small ribosomal subunit protein uS19.